The primary structure comprises 149 residues: UPF0208 membrane protein VFMJ11_0876 (149 aa).

2 consecutive transmembrane segments (helical) span residues F41–N61 and A69–N89.

The protein belongs to the UPF0208 family.

It is found in the cell inner membrane. This chain is UPF0208 membrane protein VFMJ11_0876, found in Aliivibrio fischeri (strain MJ11) (Vibrio fischeri).